Reading from the N-terminus, the 495-residue chain is REST corepressor 3 (495 aa).

Positions 1 to 83 (MRVGAEYQAR…KSLADLPNFT (83 aa)) constitute an ELM2 domain. Residue Lys20 forms a Glycyl lysine isopeptide (Lys-Gly) (interchain with G-Cter in SUMO2) linkage. Positions 84–135 (PFPDEWTVEDKVLFEQAFSFHGKSFHRIQQMLPDKTIASLVKYYYSWKKTRS) constitute an SANT 1 domain. Residues 147-219 (LANRHNQGDS…SQRSKCRPPK (73 aa)) form a disordered region. Phosphoserine is present on residues Ser156 and Ser171. Over residues 162–184 (ETHPMDGNDSDYDPKKEAKKEGN) the composition is skewed to basic and acidic residues. Lys193 is covalently cross-linked (Glycyl lysine isopeptide (Lys-Gly) (interchain with G-Cter in SUMO2)). Residues 205 to 217 (QHRHHSQRSKCRP) are compositionally biased toward basic residues. Positions 237 to 273 (AANTILRQLDMELISLKRQVQNAKQVNSALKQKMEGG) form a coiled coil. A Glycyl lysine isopeptide (Lys-Gly) (interchain with G-Cter in SUMO2) cross-link involves residue Lys285. One can recognise an SANT 2 domain in the interval 285-336 (KINARWTTEEQLLAVQGVRKYGKDFQAIADVIGNKTVGQVKNFFVNYRRRFN). The interval 346-495 (AEQGTQASNG…IQTDSQSSLH (150 aa)) is disordered. The span at 348 to 357 (QGTQASNGDA) shows a compositional bias: polar residues. Thr376 is modified (phosphothreonine). The segment covering 393-405 (PSPPAPSSTPTPT) has biased composition (pro residues). Low complexity predominate over residues 419-428 (RPTLPAAPAL). Asymmetric dimethylarginine is present on residues Arg445 and Arg457. Residues 475–495 (VGGQQPPSLIGIQTDSQSSLH) show a composition bias toward polar residues.

Belongs to the CoREST family.

Its subcellular location is the nucleus. May act as a component of a corepressor complex that represses transcription. This Homo sapiens (Human) protein is REST corepressor 3 (RCOR3).